A 156-amino-acid chain; its full sequence is MPLLLSGKKFHNDLKKNKCLAMFAPLEGGYETRLLRRMRAKGFKTYITSARGLGDPEVFLLNLHGIRPPHLGHQSIGRNGALGEVQQVIPQASELFNENDKDKLLWLLEGQVLSQSELENLIKLPTADNKLKIVVEMGGSRKLEWKSLNDYVLNEF.

The protein belongs to the complex I NdhN subunit family. As to quaternary structure, NDH-1 can be composed of about 15 different subunits; different subcomplexes with different compositions have been identified which probably have different functions.

The protein resides in the cellular thylakoid membrane. It catalyses the reaction a plastoquinone + NADH + (n+1) H(+)(in) = a plastoquinol + NAD(+) + n H(+)(out). It carries out the reaction a plastoquinone + NADPH + (n+1) H(+)(in) = a plastoquinol + NADP(+) + n H(+)(out). Functionally, NDH-1 shuttles electrons from an unknown electron donor, via FMN and iron-sulfur (Fe-S) centers, to quinones in the respiratory and/or the photosynthetic chain. The immediate electron acceptor for the enzyme in this species is believed to be plastoquinone. Couples the redox reaction to proton translocation, and thus conserves the redox energy in a proton gradient. Cyanobacterial NDH-1 also plays a role in inorganic carbon-concentration. In Prochlorococcus marinus (strain MIT 9515), this protein is NAD(P)H-quinone oxidoreductase subunit N.